The following is a 220-amino-acid chain: Glycerol-3-phosphate acyltransferase (220 aa).

A run of 5 helical transmembrane segments spans residues 4 to 24 (LTIL…AVLV), 53 to 73 (VAAL…VYLA), 80 to 100 (PVYL…PIFF), 116 to 136 (MPIG…VLLV), and 138 to 158 (GYSS…TYLI). The tract at residues 193-220 (WGRQAQRRQEEVGEMDDVAQKRDERDKK) is disordered. Over residues 210 to 220 (VAQKRDERDKK) the composition is skewed to basic and acidic residues.

This sequence belongs to the PlsY family. Probably interacts with PlsX.

The protein localises to the cell inner membrane. The catalysed reaction is an acyl phosphate + sn-glycerol 3-phosphate = a 1-acyl-sn-glycero-3-phosphate + phosphate. The protein operates within lipid metabolism; phospholipid metabolism. Functionally, catalyzes the transfer of an acyl group from acyl-phosphate (acyl-PO(4)) to glycerol-3-phosphate (G3P) to form lysophosphatidic acid (LPA). This enzyme utilizes acyl-phosphate as fatty acyl donor, but not acyl-CoA or acyl-ACP. This chain is Glycerol-3-phosphate acyltransferase, found in Aeromonas salmonicida (strain A449).